The following is a 442-amino-acid chain: Inner membrane protein PPF-1, chloroplastic (442 aa).

Topologically, residues 1–108 (MAKTLISSPS…EFVLKVLKDG (108 aa)) are lumenal. A helical membrane pass occupies residues 109–129 (LSSVHVPYSYGFAIILLTVIV). Over 130–183 (KAATLPLTKQQVESTLAMQNLQPKIKAIQERYAGNQERIQLETSRLYTQAGVNP) the chain is Stromal. A helical transmembrane segment spans residues 184-204 (LAGCLPTLATIPVWIGLYQAL). Topologically, residues 205–296 (SNVANEGLLT…QKNTLLIFKF (92 aa)) are lumenal. A helical transmembrane segment spans residues 297-317 (LPLMIGYFSLSVPSGLTIYWF). Residues 318-442 (TNNVLSTAQQ…SKRSKRKPVA (125 aa)) are Stromal-facing. 2 disordered regions span residues 350–371 (AGQA…RQLK) and 390–442 (PLAS…KPVA). The span at 358-371 (SKPEKGGERFRQLK) shows a compositional bias: basic and acidic residues. Polar residues predominate over residues 414-427 (ESNTSKVSQEVQSF). Over residues 431–442 (RRSKRSKRKPVA) the composition is skewed to basic residues.

Belongs to the OXA1/ALB3/YidC (TC 2.A.9.2) family. Highly expressed in apical buds. Low levels of expression in leaves. Not expressed in roots, and stems.

The protein resides in the plastid. Its subcellular location is the chloroplast thylakoid membrane. May be required for the insertion of some integral membrane proteins into the chloroplast thylakoid membrane. May play a role in inhibiting senescence. In Pisum sativum (Garden pea), this protein is Inner membrane protein PPF-1, chloroplastic (PPF-1).